A 561-amino-acid chain; its full sequence is Membrane protein insertase YidC (561 aa).

6 helical membrane-spanning segments follow: residues 7–27 (ILIVALAIVSYVMVLKWNQDY), 342–362 (LELTVDYGFLWFIAQPIFWLL), 368–388 (LLGNWGWSIIVLTMLIKGLFF), 438–458 (LGGCLPILVQMPVFLALYWVL), 469–489 (WMLWITDLSIKDPFFILPIIM), and 516–536 (PIIFTFFFLWFPAGLVLYWVV).

The protein belongs to the OXA1/ALB3/YidC family. Type 1 subfamily. In terms of assembly, interacts with the Sec translocase complex via SecD. Specifically interacts with transmembrane segments of nascent integral membrane proteins during membrane integration.

Its subcellular location is the cell inner membrane. Required for the insertion and/or proper folding and/or complex formation of integral membrane proteins into the membrane. Involved in integration of membrane proteins that insert both dependently and independently of the Sec translocase complex, as well as at least some lipoproteins. Aids folding of multispanning membrane proteins. The polypeptide is Membrane protein insertase YidC (Pseudomonas entomophila (strain L48)).